A 104-amino-acid polypeptide reads, in one-letter code: DNA-directed RNA polymerase subunit omega (104 aa).

The disordered stretch occupies residues 60–104 (VIHPDPEGKREAVRRRAEEERLRKEEEERKIKEQIAKEKEEGEKI). The span at 63–104 (PDPEGKREAVRRRAEEERLRKEEEERKIKEQIAKEKEEGEKI) shows a compositional bias: basic and acidic residues.

It belongs to the RNA polymerase subunit omega family. In terms of assembly, the RNAP catalytic core consists of 2 alpha, 1 beta, 1 beta' and 1 omega subunit. When a sigma factor is associated with the core the holoenzyme is formed, which can initiate transcription.

The enzyme catalyses RNA(n) + a ribonucleoside 5'-triphosphate = RNA(n+1) + diphosphate. Functionally, promotes RNA polymerase assembly. Latches the N- and C-terminal regions of the beta' subunit thereby facilitating its interaction with the beta and alpha subunits. This is DNA-directed RNA polymerase subunit omega from Streptococcus sanguinis (strain SK36).